The primary structure comprises 96 residues: Aspartyl/glutamyl-tRNA(Asn/Gln) amidotransferase subunit C (96 aa).

It belongs to the GatC family. In terms of assembly, heterotrimer of A, B and C subunits.

The catalysed reaction is L-glutamyl-tRNA(Gln) + L-glutamine + ATP + H2O = L-glutaminyl-tRNA(Gln) + L-glutamate + ADP + phosphate + H(+). It carries out the reaction L-aspartyl-tRNA(Asn) + L-glutamine + ATP + H2O = L-asparaginyl-tRNA(Asn) + L-glutamate + ADP + phosphate + 2 H(+). Its function is as follows. Allows the formation of correctly charged Asn-tRNA(Asn) or Gln-tRNA(Gln) through the transamidation of misacylated Asp-tRNA(Asn) or Glu-tRNA(Gln) in organisms which lack either or both of asparaginyl-tRNA or glutaminyl-tRNA synthetases. The reaction takes place in the presence of glutamine and ATP through an activated phospho-Asp-tRNA(Asn) or phospho-Glu-tRNA(Gln). The sequence is that of Aspartyl/glutamyl-tRNA(Asn/Gln) amidotransferase subunit C from Exiguobacterium sibiricum (strain DSM 17290 / CCUG 55495 / CIP 109462 / JCM 13490 / 255-15).